Here is a 630-residue protein sequence, read N- to C-terminus: Phosphomethylpyrimidine synthase (630 aa).

Disordered stretches follow at residues 1 to 22 (MADI…TTGP) and 97 to 120 (AQRE…VPAF). Substrate is bound by residues Asn224, Met253, Tyr282, His318, 338-340 (SRG), 379-382 (DGLR), and Glu418. Zn(2+) is bound at residue His422. Tyr445 is a substrate binding site. His486 serves as a coordination point for Zn(2+). [4Fe-4S] cluster-binding residues include Cys566, Cys569, and Cys574.

It belongs to the ThiC family. Homodimer. [4Fe-4S] cluster is required as a cofactor.

The enzyme catalyses 5-amino-1-(5-phospho-beta-D-ribosyl)imidazole + S-adenosyl-L-methionine = 4-amino-2-methyl-5-(phosphooxymethyl)pyrimidine + CO + 5'-deoxyadenosine + formate + L-methionine + 3 H(+). It functions in the pathway cofactor biosynthesis; thiamine diphosphate biosynthesis. In terms of biological role, catalyzes the synthesis of the hydroxymethylpyrimidine phosphate (HMP-P) moiety of thiamine from aminoimidazole ribotide (AIR) in a radical S-adenosyl-L-methionine (SAM)-dependent reaction. This Sphingopyxis alaskensis (strain DSM 13593 / LMG 18877 / RB2256) (Sphingomonas alaskensis) protein is Phosphomethylpyrimidine synthase.